Here is a 366-residue protein sequence, read N- to C-terminus: Endophilin-B1 (366 aa).

Residues 1 to 30 form a membrane-binding amphipathic helix region; that stretch reads MNIMDFNMKKLAADAGTFLSRAVQFTEEKL. The tract at residues 1–37 is required for membrane binding; that stretch reads MNIMDFNMKKLAADAGTFLSRAVQFTEEKLGQAEKTE. A BAR domain is found at 27-261; that stretch reads EEKLGQAEKT…LGSFPSTFLS (235 aa). Coiled-coil stretches lie at residues 34–54 and 160–185; these read EKTELDAHLENLLSKAECTKQ and KERKLLQNKRLDLDAAKTRLKKAKVA. The SH3 domain maps to 306–366; that stretch reads SGSRKARVLY…VPITYLELLN (61 aa).

Belongs to the endophilin family. Homodimer, and heterodimer with SH3GLB2. Binds BAX. Binds DNM1, HTT, AMPH, BIN1 and ARFGAP1.

It is found in the cytoplasm. The protein resides in the golgi apparatus membrane. The protein localises to the mitochondrion outer membrane. Functionally, may be required for normal outer mitochondrial membrane dynamics. Required for coatomer-mediated retrograde transport in certain cells. May recruit other proteins to membranes with high curvature. May promote membrane fusion. This is Endophilin-B1 from Gallus gallus (Chicken).